The sequence spans 445 residues: Methyl-CpG-binding domain protein 4-like protein (445 aa).

Residue aspartate 429 is part of the active site.

As to expression, isoform 1 and isoform 4: Expressed in leaves and flowers, but not in roots or stems.

The protein resides in the nucleus. Functionally, monofunctional DNA glycosylase targeting U:G and T:G mispairs. Excises uracil derivatives and exhibits a preference for a CpG sequence context, irrespective of the methylation status of the complementary strand. The activity follows a biphasic kinetics, with an initial burst of product accumulation followed by a slower phase. Specifically binds its reaction product. Triggers the base excision repair (BER) pathway. The sequence is that of Methyl-CpG-binding domain protein 4-like protein from Arabidopsis thaliana (Mouse-ear cress).